A 486-amino-acid polypeptide reads, in one-letter code: Protein nucleotidyltransferase YdiU (486 aa).

ATP contacts are provided by Gly-90, Gly-92, Arg-93, Lys-113, Asp-125, Gly-126, Arg-176, and Arg-183. Residue Asp-252 is the Proton acceptor of the active site. Mg(2+) is bound by residues Asn-253 and Asp-262. Asp-262 lines the ATP pocket.

The protein belongs to the SELO family. The cofactor is Mg(2+). Mn(2+) serves as cofactor.

The enzyme catalyses L-seryl-[protein] + ATP = 3-O-(5'-adenylyl)-L-seryl-[protein] + diphosphate. The catalysed reaction is L-threonyl-[protein] + ATP = 3-O-(5'-adenylyl)-L-threonyl-[protein] + diphosphate. It catalyses the reaction L-tyrosyl-[protein] + ATP = O-(5'-adenylyl)-L-tyrosyl-[protein] + diphosphate. It carries out the reaction L-histidyl-[protein] + UTP = N(tele)-(5'-uridylyl)-L-histidyl-[protein] + diphosphate. The enzyme catalyses L-seryl-[protein] + UTP = O-(5'-uridylyl)-L-seryl-[protein] + diphosphate. The catalysed reaction is L-tyrosyl-[protein] + UTP = O-(5'-uridylyl)-L-tyrosyl-[protein] + diphosphate. Functionally, nucleotidyltransferase involved in the post-translational modification of proteins. It can catalyze the addition of adenosine monophosphate (AMP) or uridine monophosphate (UMP) to a protein, resulting in modifications known as AMPylation and UMPylation. This is Protein nucleotidyltransferase YdiU from Pseudomonas aeruginosa (strain LESB58).